We begin with the raw amino-acid sequence, 643 residues long: Threonine--tRNA ligase 1 (643 aa).

The region spanning 3-64 (DMVKITFPDG…NEDGTVEIIT (62 aa)) is the TGS domain. The interval 245–542 (DHRKLGKELK…LIEEHKGALP (298 aa)) is catalytic. 3 residues coordinate Zn(2+): Cys-338, His-389, and His-519.

Belongs to the class-II aminoacyl-tRNA synthetase family. In terms of assembly, homodimer. The cofactor is Zn(2+).

Its subcellular location is the cytoplasm. The enzyme catalyses tRNA(Thr) + L-threonine + ATP = L-threonyl-tRNA(Thr) + AMP + diphosphate + H(+). Catalyzes the attachment of threonine to tRNA(Thr) in a two-step reaction: L-threonine is first activated by ATP to form Thr-AMP and then transferred to the acceptor end of tRNA(Thr). Also edits incorrectly charged L-seryl-tRNA(Thr). This is Threonine--tRNA ligase 1 (thrS) from Bacillus subtilis (strain 168).